Consider the following 612-residue polypeptide: Proline-rich protein 14 (612 aa).

Position 1 is an N-acetylmethionine (Met-1). Polar residues-rich tracts occupy residues 1–15 and 86–96; these read MDLP…QPSL and VCTQSPALPSQ. Disordered stretches follow at residues 1 to 48, 65 to 96, 119 to 150, and 206 to 256; these read MDLP…EKAS, VPLT…LPSQ, RARQ…QVPQ, and PTLT…PALE. Residues 1–135 form a sufficient for heterochromatin association in interphase and chromatin association in anaphase region; sequence MDLPGNSSPF…ALRMRSRAAS (135 aa). Residues 85–405 are required for the interaction with GRB2 and sufficient to promote the phosphorylation of AKT and cell proliferation; sequence PVCTQSPALP…MARTPPPPRP (321 aa). Residues 136 to 392 form a required for nuclear lamina association region; sequence GPEESPSKKT…QSRPRRHTVG (257 aa). The segment covering 243–252 has biased composition (pro residues); the sequence is ADPPESPVPD. Residue Ser-307 is modified to Phosphoserine. Disordered stretches follow at residues 323-405, 444-463, and 553-583; these read QSRA…PPRP, LGST…FSDP, and DSSL…PSQD. A compositionally biased stretch (polar residues) spans 342-359; the sequence is WRTQCNSLAPVSKSSLGR. Over residues 366-379 the composition is skewed to pro residues; the sequence is LGPPDPGSWPPVPS. Basic and acidic residues predominate over residues 448–463; it reads KGKELRASKDKVFSDP. The interval 546-563 is required for nuclear localization; that stretch reads RRAVEFRDSSLPRSRRPS. Over residues 570 to 583 the composition is skewed to polar residues; the sequence is ASRTLTPNLAPSQD.

As to quaternary structure, interacts (via proline-rich region) with GRB2 (via SH3 domain 2). Interacts (via N-terminus) with CBX5.

The protein localises to the chromosome. Its subcellular location is the nucleus. It is found in the nucleus lamina. The protein resides in the nucleoplasm. Functionally, functions in tethering peripheral heterochromatin to the nuclear lamina during interphase, possibly through the interaction with heterochromatin protein CBX5/HP1 alpha. Might play a role in reattaching heterochromatin to the nuclear lamina at mitotic exit. Promotes myoblast differentiation during skeletal myogenesis, possibly by stimulating transcription factor MyoD activity via binding to CBX5/HP1 alpha. Involved in the positive regulation of the PI3K-Akt-mTOR signaling pathway and in promoting cell proliferation, possibly via binding to GRB2. This is Proline-rich protein 14 (Prr14) from Mus musculus (Mouse).